A 310-amino-acid polypeptide reads, in one-letter code: Olfactory receptor 2A12 (310 aa).

The Extracellular segment spans residues 1–24 (MESNQTWITEVILLGFQVDPALEL). The N-linked (GlcNAc...) asparagine glycan is linked to Asn-4. Residues 25 to 48 (FLFGFFLLFYSLTLMGNGIILGLI) form a helical membrane-spanning segment. Topologically, residues 49–56 (YLDSRLHT) are cytoplasmic. Residues 57–78 (PMYVFLSHLAIVDMSYASSTVP) traverse the membrane as a helical segment. Residues 79-99 (KMLANLVMHKKVISFAPCILQ) are Extracellular-facing. A disulfide bond links Cys-96 and Cys-188. The helical transmembrane segment at 100-119 (TFLYLAFAITECLILVMMCY) threads the bilayer. Residues 120–138 (DRYVAICHPLQYTLIMNWR) are Cytoplasmic-facing. The helical transmembrane segment at 139–157 (VCTVLASTCWIFSFLLALV) threads the bilayer. Topologically, residues 158–194 (HITLILRLPFCGPQKINHFFCQIMSVFKLACADTRLN) are extracellular. The chain crosses the membrane as a helical span at residues 195–218 (QVVLFAGSAFILVGPLCLVLVSYL). The Cytoplasmic portion of the chain corresponds to 219 to 235 (HILVAILRIQSGEGRRK). Residues 236–258 (AFSTCSSHLCVVGLFFGSAIVMY) form a helical membrane-spanning segment. Residues 259–271 (MAPKSSHSQERRK) lie on the Extracellular side of the membrane. Residues 272 to 291 (ILSLFYSLFNPILNPLIYSL) form a helical membrane-spanning segment. The Cytoplasmic segment spans residues 292 to 310 (RNAEVKGALKRVLWKQRSM).

The protein belongs to the G-protein coupled receptor 1 family.

It localises to the cell membrane. Odorant receptor. This chain is Olfactory receptor 2A12 (OR2A12), found in Homo sapiens (Human).